A 578-amino-acid polypeptide reads, in one-letter code: Glutathione hydrolase 2 (578 aa).

The first 26 residues, M1–A26, serve as a signal peptide directing secretion. The N-linked (GlcNAc...) asparagine glycan is linked to N94. Position 103 (R103) interacts with L-glutamate. 2 N-linked (GlcNAc...) asparagine glycosylation sites follow: N176 and N227. Residue T374 is the Nucleophile of the active site. L-glutamate-binding positions include T392, N394, E413, D416, S446–S447, and G467–G468. N-linked (GlcNAc...) asparagine glycosylation occurs at N511.

Belongs to the gamma-glutamyltransferase family. In terms of tissue distribution, expressed in roots, immature trichomes and pollen. In developing siliques, specifically expressed in the embryo, endosperm, outer integument and a small portion of the funiculus.

It localises to the secreted. It is found in the extracellular space. The protein resides in the apoplast. The catalysed reaction is an N-terminal (5-L-glutamyl)-[peptide] + an alpha-amino acid = 5-L-glutamyl amino acid + an N-terminal L-alpha-aminoacyl-[peptide]. It catalyses the reaction glutathione + H2O = L-cysteinylglycine + L-glutamate. It carries out the reaction an S-substituted glutathione + H2O = an S-substituted L-cysteinylglycine + L-glutamate. Its pathway is sulfur metabolism; glutathione metabolism. In terms of biological role, may be required for glutathione transport into developing seeds. The chain is Glutathione hydrolase 2 (GGT2) from Arabidopsis thaliana (Mouse-ear cress).